The chain runs to 393 residues: Probable acetyl-CoA acyltransferase (393 aa).

The active-site Acyl-thioester intermediate is the Cys-88. Residues His-349 and Cys-378 each act as proton acceptor in the active site.

This sequence belongs to the thiolase-like superfamily. Thiolase family.

It localises to the cytoplasm. It carries out the reaction 2 acetyl-CoA = acetoacetyl-CoA + CoA. The polypeptide is Probable acetyl-CoA acyltransferase (Staphylococcus aureus (strain bovine RF122 / ET3-1)).